The following is a 419-amino-acid chain: Elongation factor Tu, chloroplastic (419 aa).

Positions 10 to 214 (KPHVNIGTIG…KVDEYIPTPD (205 aa)) constitute a tr-type G domain. Residues 19-26 (GHVDHGKT) are G1. 19–26 (GHVDHGKT) serves as a coordination point for GTP. A Mg(2+)-binding site is contributed by Thr-26. Residues 60-64 (GITIN) form a G2 region. A G3 region spans residues 81–84 (DCPG). GTP contacts are provided by residues 81-85 (DCPGH) and 136-139 (NKED). The interval 136-139 (NKED) is G4. Residues 174 to 176 (SAL) are G5.

The protein belongs to the TRAFAC class translation factor GTPase superfamily. Classic translation factor GTPase family. EF-Tu/EF-1A subfamily.

The protein resides in the plastid. It is found in the chloroplast. It carries out the reaction GTP + H2O = GDP + phosphate + H(+). GTP hydrolase that promotes the GTP-dependent binding of aminoacyl-tRNA to the A-site of ribosomes during protein biosynthesis. This is Elongation factor Tu, chloroplastic (tufA) from Tetradesmus obliquus (Green alga).